Reading from the N-terminus, the 426-residue chain is MLDIKQIRENPQLIQERLNSRNGTYDIQPILQLDKQQRELEATRSQIQARSNEIGKIVGQKIKSGINPQDPEIQALRDEGNAIKAQLSELEPREKELKAEIEQLILALPNLPSDSTPIGKGEEENVEVRLWGDEYLPQNPNIIPHWEIGEKLGILNFERAVKVAQSRFVNLIGAGAALERALINFMLKMQTAAGYIEVSPPLLVNTDSLTGTGQLPKFAEESFKCADDELWLIPTAEVPVTNLYRGEILAAENLPIYHCAYTPCFRREAGSYGRDMRGLIRLHQFNKVELVKVVHPSTSFDELEKLVGNAEAILQALKLPYRVINLCTGDLGFGATKTYDLEVWLPSSGKYREISSCSNCFDFQARRADIRFKEAGKKGTQFVHTLNGSGLAVGRTMAAILENYQQPDGTILIPEVLQPFLGREVL.

235-237 (TAE) serves as a coordination point for L-serine. 266-268 (RRE) contacts ATP. An L-serine-binding site is contributed by Glu289. An ATP-binding site is contributed by 353–356 (EISS). Ser389 provides a ligand contact to L-serine.

Belongs to the class-II aminoacyl-tRNA synthetase family. Type-1 seryl-tRNA synthetase subfamily. In terms of assembly, homodimer. The tRNA molecule binds across the dimer.

The protein resides in the cytoplasm. It carries out the reaction tRNA(Ser) + L-serine + ATP = L-seryl-tRNA(Ser) + AMP + diphosphate + H(+). The catalysed reaction is tRNA(Sec) + L-serine + ATP = L-seryl-tRNA(Sec) + AMP + diphosphate + H(+). It participates in aminoacyl-tRNA biosynthesis; selenocysteinyl-tRNA(Sec) biosynthesis; L-seryl-tRNA(Sec) from L-serine and tRNA(Sec): step 1/1. In terms of biological role, catalyzes the attachment of serine to tRNA(Ser). Is also able to aminoacylate tRNA(Sec) with serine, to form the misacylated tRNA L-seryl-tRNA(Sec), which will be further converted into selenocysteinyl-tRNA(Sec). The chain is Serine--tRNA ligase from Nostoc sp. (strain PCC 7120 / SAG 25.82 / UTEX 2576).